The chain runs to 639 residues: MHMLSFIGALALPVFVCAQSCEPASLSPRLAGVDLEKFRLTPNAEYVDSDQQIPISTTNVGLIEQSYVETAIKLVRETFPTASFRLREDHYVGDNGVAHVHFRQTVHDLDVDNGDFNVNVGRDGSVFSYGNSFYTGPVPSITQLTKRDFTDPVAALKFALTHLQLPITAGDVSAESTEHPHKYILRGTSGAVTDPKARLVYLVKPEGTLCLVWRVETDVDDNWLLTYVDAKTAEDIHGVVDYISEATFQVYGWGINDPGQVDSRAVLTDPWNLKESPLTWFSDGQKNWTTTRGNNGIAQENINNLPTYLNNFRPDSPTQNFSYEYPAGGSPKDYINASITQLFYTANAYHDLLYTLGFNEKAGNFQWNNSGLGGKDKDYVILNAQDGASRNNADFATPPDGSPARMRMYLFTHTTPPRDGVFESGIVIHEYTHGLSMRLTGGPDNSRCLSAFESASMGEGWGDFMATAIRLKPSDTRATDYGMGMWVYNDEKGIRQYLYSTSMETNPLNYTSLNRMWEAHAGGTVWASMLYEVLWNLIDKHGKNDGPRPTFDERGVPRDGKYLAMKIVIDAMALQPCNPDFVQARNAILDADQALTGGQNKCEIWTGFAKRGLGQGAEYGRGRRVGSYDIPSGVCQKKI.

Residues 1–16 (MHMLSFIGALALPVFV) form the signal peptide. A propeptide spanning residues 17 to 245 (CAQSCEPASL…IHGVVDYISE (229 aa)) is cleaved from the precursor. N287, N320, N336, and N368 each carry an N-linked (GlcNAc...) asparagine glycan. Residue H429 participates in Zn(2+) binding. Residue E430 is part of the active site. H433 is a binding site for Zn(2+). N-linked (GlcNAc...) asparagine glycosylation occurs at N509.

It belongs to the peptidase M36 family. The cofactor is Zn(2+).

It localises to the secreted. Functionally, secreted metalloproteinase that allows assimilation of proteinaceous substrates. This chain is Extracellular metalloproteinase mep (mep), found in Aspergillus flavus (strain ATCC 200026 / FGSC A1120 / IAM 13836 / NRRL 3357 / JCM 12722 / SRRC 167).